A 124-amino-acid polypeptide reads, in one-letter code: Ribonuclease pancreatic (124 aa).

Residues 1–13 (KESAAAKFERQHM) show a composition bias toward basic and acidic residues. The segment at 1-24 (KESAAAKFERQHMDSSTSSASSSN) is disordered. Substrate contacts are provided by Lys7 and Arg10. His12 (proton acceptor) is an active-site residue. Cystine bridges form between Cys26-Cys84, Cys40-Cys95, Cys58-Cys110, and Cys65-Cys72. The N-linked (GlcNAc...) asparagine; partial glycan is linked to Asn34. Substrate contacts are provided by residues 41-45 (KPVNT), Lys66, and Arg85. The Proton donor role is filled by His119.

This sequence belongs to the pancreatic ribonuclease family. As to quaternary structure, monomer. Interacts with and forms tight 1:1 complexes with RNH1. Dimerization of two such complexes may occur. Interaction with RNH1 inhibits this protein. In terms of tissue distribution, pancreas.

The protein localises to the secreted. It carries out the reaction an [RNA] containing cytidine + H2O = an [RNA]-3'-cytidine-3'-phosphate + a 5'-hydroxy-ribonucleotide-3'-[RNA].. It catalyses the reaction an [RNA] containing uridine + H2O = an [RNA]-3'-uridine-3'-phosphate + a 5'-hydroxy-ribonucleotide-3'-[RNA].. Its function is as follows. Endonuclease that catalyzes the cleavage of RNA on the 3' side of pyrimidine nucleotides. Acts on single-stranded and double-stranded RNA. The protein is Ribonuclease pancreatic (RNASE1) of Aepyceros melampus (Impala).